Reading from the N-terminus, the 1706-residue chain is DDT domain-containing protein PTM (1706 aa).

The segment covering 1-16 has biased composition (basic residues); that stretch reads MEAKVPRPRGRPRKRQ. Disordered regions lie at residues 1 to 27 and 144 to 168; these read MEAKVPRPRGRPRKRQRLEDDNRKLNN and VTNSEDGDSYSDSESSESGDKRGSD. A Nuclear localization signal motif is present at residues 9–18; sequence RGRPRKRQRL. A compositionally biased stretch (acidic residues) spans 148–160; sequence EDGDSYSDSESSE. Residues 192–252 enclose the DDT domain; sequence EEAVAHLLSV…LRALKGHLER (61 aa). Positions 375 to 393 are enriched in basic and acidic residues; the sequence is YKEKEVTDSSTNESKDLDS. Residues 375–408 form a disordered region; sequence YKEKEVTDSSTNESKDLDSRCTNGGSNEVSSDLD. The span at 394–408 shows a compositional bias: polar residues; the sequence is RCTNGGSNEVSSDLD. The PHD-type 1 zinc finger occupies 411 to 458; it reads SDECRICGMDGTLLCCDGCPLAYHSRCIGVVKMYIPDGPWFCPECTIN. 2 disordered regions span residues 1165–1194 and 1311–1345; these read KPPSQQLSSQKPRENTSGVKQVTPDSSVSK and TNQKQRQGNSGLDSDSERMSEQKDSKPSTPLPATP. Composition is skewed to polar residues over residues 1167–1194 and 1311–1323; these read PSQQLSSQKPRENTSGVKQVTPDSSVSK and TNQKQRQGNSGLD. Residues 1325–1336 are compositionally biased toward basic and acidic residues; that stretch reads DSERMSEQKDSK. 5 helical membrane-spanning segments follow: residues 1539 to 1559, 1569 to 1589, 1596 to 1616, 1624 to 1644, and 1682 to 1702; these read ALGSITLGSFGAITQFKSILP, LAGPFAGAALSVSMFAVGLFL, ANDLVQVPSMLFQGSLLLGLI, AALHAATVSIHPLVIAGWCGL, and MLGLRVLGGPLALPWGLYVLI.

Interacts (via the DDT domain) with CHR11 (via C-terminus).

It localises to the plastid. The protein localises to the chloroplast outer membrane. The protein resides in the nucleus. Functionally, membrane-bound transcription factor required for the plastid-to-nucleus retrograde signaling. Functions in multiple retrograde pathways. The plastid-to-nucleus signal plays an important role in the coordinated expression of both nuclear- and chloroplast-localized genes that encode photosynthesis-related proteins. In the nucleus, activates ABI4 transcription in a PHD-dependent manner associated with histone modifications. Localized primarily in the chloroplast outer membrane as dormant form and, in response to retrograde signals, is released from the membrane through proteolytic cleavage and its cleaved fragment containing the transcription factor domain is redistributed to the nucleus, where it regulates the expression of particular nuclear genes. The polypeptide is DDT domain-containing protein PTM (Arabidopsis thaliana (Mouse-ear cress)).